Reading from the N-terminus, the 392-residue chain is L-rhamnonate dehydratase (392 aa).

Positions 22 and 48 each coordinate substrate. 3 residues coordinate Mg(2+): Asp-214, Glu-240, and Glu-268. Residue His-318 is the Proton acceptor of the active site. A substrate-binding site is contributed by Glu-338.

Belongs to the mandelate racemase/muconate lactonizing enzyme family. RhamD subfamily. Homooctamer; tetramer of dimers. The cofactor is Mg(2+).

It carries out the reaction L-rhamnonate = 2-dehydro-3-deoxy-L-rhamnonate + H2O. Catalyzes the dehydration of L-rhamnonate to 2-keto-3-deoxy-L-rhamnonate (KDR). The polypeptide is L-rhamnonate dehydratase (Burkholderia ambifaria (strain MC40-6)).